A 621-amino-acid polypeptide reads, in one-letter code: 1-deoxy-D-xylulose-5-phosphate synthase (621 aa).

Thiamine diphosphate contacts are provided by residues His-80 and 121–123; that span reads GHS. Asp-152 is a binding site for Mg(2+). Thiamine diphosphate-binding positions include 153–154, Asn-181, Tyr-288, and Glu-370; that span reads GA. Asn-181 lines the Mg(2+) pocket.

It belongs to the transketolase family. DXPS subfamily. As to quaternary structure, homodimer. Mg(2+) is required as a cofactor. The cofactor is thiamine diphosphate.

It carries out the reaction D-glyceraldehyde 3-phosphate + pyruvate + H(+) = 1-deoxy-D-xylulose 5-phosphate + CO2. It functions in the pathway metabolic intermediate biosynthesis; 1-deoxy-D-xylulose 5-phosphate biosynthesis; 1-deoxy-D-xylulose 5-phosphate from D-glyceraldehyde 3-phosphate and pyruvate: step 1/1. Catalyzes the acyloin condensation reaction between C atoms 2 and 3 of pyruvate and glyceraldehyde 3-phosphate to yield 1-deoxy-D-xylulose-5-phosphate (DXP). The sequence is that of 1-deoxy-D-xylulose-5-phosphate synthase from Pseudoalteromonas atlantica (strain T6c / ATCC BAA-1087).